A 723-amino-acid chain; its full sequence is Catalase-peroxidase (723 aa).

A cross-link (tryptophyl-tyrosyl-methioninium (Trp-Tyr) (with M-251)) is located at residues 97–225; it reads WHAAGSYRVT…LAAVQMGLIY (129 aa). The active-site Proton acceptor is histidine 98. The tryptophyl-tyrosyl-methioninium (Tyr-Met) (with W-97) cross-link spans 225–251; sequence YVNPEGVNGKSDPLATAAQMRETFARM. Residue histidine 266 coordinates heme b.

This sequence belongs to the peroxidase family. Peroxidase/catalase subfamily. As to quaternary structure, homodimer or homotetramer. It depends on heme b as a cofactor. In terms of processing, formation of the three residue Trp-Tyr-Met cross-link is important for the catalase, but not the peroxidase activity of the enzyme.

The enzyme catalyses H2O2 + AH2 = A + 2 H2O. The catalysed reaction is 2 H2O2 = O2 + 2 H2O. Functionally, bifunctional enzyme with both catalase and broad-spectrum peroxidase activity. In Agrobacterium fabrum (strain C58 / ATCC 33970) (Agrobacterium tumefaciens (strain C58)), this protein is Catalase-peroxidase.